A 228-amino-acid polypeptide reads, in one-letter code: uncharacterized protein (228 aa).

A disordered region spans residues 1 to 34 (MPRDTKPYSRPANAPRPGVKTERSNQFKAASTKY).

This is an uncharacterized protein from Orgyia pseudotsugata (Douglas-fir tussock moth).